Here is a 406-residue protein sequence, read N- to C-terminus: Corticosteroid-binding globulin (406 aa).

Positions 1–22 (MPLLLYTCLLWLLSSGLWTVQA) are cleaved as a signal peptide. Asn31 and Asn96 each carry an N-linked (GlcNAc...) asparagine glycan. Residue Gln255 coordinates cortisol. Residue Asn261 is glycosylated (N-linked (GlcNAc...) asparagine). Residue Asp287 participates in cortisol binding. Asn331 and Asn360 each carry an N-linked (GlcNAc...) asparagine glycan. Residue Trp394 participates in cortisol binding.

It belongs to the serpin family. Expressed by the liver; secreted in plasma.

It localises to the secreted. In terms of biological role, major transport protein for glucocorticoids and progestins in the blood of almost all vertebrate species. The polypeptide is Corticosteroid-binding globulin (SERPINA6) (Saimiri sciureus (Common squirrel monkey)).